A 172-amino-acid chain; its full sequence is Ribosome maturation factor RimM (172 aa).

Positions 96-168 (DGEFYYHEII…RVDVEILEGL (73 aa)) constitute a PRC barrel domain.

It belongs to the RimM family. Binds ribosomal protein uS19.

It is found in the cytoplasm. An accessory protein needed during the final step in the assembly of 30S ribosomal subunit, possibly for assembly of the head region. Essential for efficient processing of 16S rRNA. May be needed both before and after RbfA during the maturation of 16S rRNA. It has affinity for free ribosomal 30S subunits but not for 70S ribosomes. This chain is Ribosome maturation factor RimM, found in Streptococcus pneumoniae serotype 4 (strain ATCC BAA-334 / TIGR4).